Reading from the N-terminus, the 213-residue chain is Sclerostin (213 aa).

The N-terminal stretch at 1–23 (MQLPLALCLVCLLVHTAFRVVEG) is a signal peptide. Residues 41–71 (GEYPEPPPELENNKTMNRAENGGRPPHHPFE) form a disordered region. N-linked (GlcNAc...) asparagine glycosylation is present at Asn53. Cystine bridges form between Cys80–Cys134, Cys94–Cys148, Cys105–Cys165, and Cys109–Cys167. The CTCK domain maps to 82–172 (ELHFTRYVTD…ASCKCKRLTR (91 aa)). N-linked (GlcNAc...) asparagine glycosylation occurs at Asn175. Residues 178–213 (ELKDFGTEAARPQKGRKPRPRARSAKANQAELENAY) form a disordered region. Over residues 190–201 (QKGRKPRPRARS) the composition is skewed to basic residues.

Belongs to the sclerostin family. In terms of assembly, interacts with LRP4 (via the extracellular domain); the interaction facilitates the inhibition of Wnt signaling. Interacts with LRP5 (via the first two YWTD-EGF repeat domains); the interaction inhibits Wnt-mediated signaling. Interacts with LRP6. In terms of tissue distribution, widely expressed at low levels with highest levels in bone, cartilage, kidney, liver, bone marrow and primary osteoblasts differentiated for 21 days. Detected in the subendothelial layer of the aortic intima (at protein level).

Its subcellular location is the secreted. It is found in the extracellular space. The protein resides in the extracellular matrix. Functionally, negative regulator of bone growth that acts through inhibition of Wnt signaling and bone formation. In Homo sapiens (Human), this protein is Sclerostin.